Here is a 296-residue protein sequence, read N- to C-terminus: uncharacterized protein (296 aa).

Residues 7-26 (CFSLVCALGASTYLLWRGWL) traverse the membrane as a helical segment.

It is found in the membrane. This is an uncharacterized protein from Treponema pallidum (strain Nichols).